The sequence spans 239 residues: Probable transcriptional regulatory protein CD630_07950 (239 aa).

Belongs to the TACO1 family.

Its subcellular location is the cytoplasm. This chain is Probable transcriptional regulatory protein CD630_07950, found in Clostridioides difficile (strain 630) (Peptoclostridium difficile).